The following is a 478-amino-acid chain: Sodium-coupled neutral amino acid transporter 5 (478 aa).

The segment at 1-20 is disordered; it reads MAISSAEGMELQDPKMNGAL. Residues 1–57 are Cytoplasmic-facing; the sequence is MAISSAEGMELQDPKMNGALPGNAVEQEHEGFLPSHSPSPGRKPAQFMDFEGKTSFG. A helical transmembrane segment spans residues 58-80; the sequence is MSVFNLSNAIMGSGILGLAYAMA. Topologically, residues 81–93 are extracellular; that stretch reads HTGILLFLALLLC. The chain crosses the membrane as a helical span at residues 94-114; it reads IALLSSYSIHLLLTCAGVVGI. Residues 115–131 are Cytoplasmic-facing; it reads RAYEQLGQRALGPAGKV. A helical transmembrane segment spans residues 132–152; it reads VVAAVICLHNVGAMSSYLFII. Residues 153–172 lie on the Extracellular side of the membrane; it reads KSELPLVIATFLDMDPEGDW. Residues 173-193 form a helical membrane-spanning segment; it reads FLKGNLLIIIVSVLIILPLAL. Over 194 to 198 the chain is Cytoplasmic; it reads MRHLG. A helical membrane pass occupies residues 199–219; that stretch reads YLGYTSGLSLTCMLFFLISVI. The Extracellular portion of the chain corresponds to 220–263; that stretch reads YKKFQLGCTVGHNGTAVESKSSPSLPIHGLNTSCEAQMFTADSQ. Cys-227 and Cys-253 form a disulfide bridge. N-linked (GlcNAc...) asparagine glycosylation is present at Asn-232. Residues 264-284 traverse the membrane as a helical segment; it reads MFYTVPIMAFAFVCHPEVLPI. Over 285–301 the chain is Cytoplasmic; it reads YTELCRPSKRRMQAVAN. Residues 302–322 traverse the membrane as a helical segment; it reads VSIGAMFCMYGLTATFGYLTF. Over 323-340 the chain is Extracellular; it reads YSSVEAEMLHMYSQHDLL. A helical transmembrane segment spans residues 341-361; it reads ILCVRLAVLLAVTLTVPVVLF. At 362–382 the chain is on the cytoplasmic side; it reads PIRRALQQLLFPSKAFSWPRH. Residues 383–403 form a helical membrane-spanning segment; it reads VAIALILLVLVNVLVICVPTI. The Extracellular portion of the chain corresponds to 404–405; that stretch reads RD. The chain crosses the membrane as a helical span at residues 406–426; the sequence is IFGVIGSTSAPSLIFILPSIF. Residues 427-445 are Cytoplasmic-facing; sequence YLRIVPSEVEPLYSWPKIQ. Residues 446–466 form a helical membrane-spanning segment; the sequence is ALCFGVLGVLFMAISLGFMFA. Residues 467–478 lie on the Extracellular side of the membrane; it reads NWATGQSHVSGH.

This sequence belongs to the amino acid/polyamine transporter 2 family.

It is found in the cell membrane. The catalysed reaction is L-serine(out) + Na(+)(out) + H(+)(in) = L-serine(in) + Na(+)(in) + H(+)(out). It carries out the reaction L-alanine(out) + Na(+)(out) + H(+)(in) = L-alanine(in) + Na(+)(in) + H(+)(out). The enzyme catalyses glycine(out) + Na(+)(out) + H(+)(in) = glycine(in) + Na(+)(in) + H(+)(out). It catalyses the reaction L-glutamine(out) + Na(+)(out) + H(+)(in) = L-glutamine(in) + Na(+)(in) + H(+)(out). The catalysed reaction is L-asparagine(out) + Na(+)(out) + H(+)(in) = L-asparagine(in) + Na(+)(in) + H(+)(out). It carries out the reaction L-histidine(out) + Na(+)(out) + H(+)(in) = L-histidine(in) + Na(+)(in) + H(+)(out). The enzyme catalyses L-cysteine(out) + Na(+)(out) + H(+)(in) = L-cysteine(in) + Na(+)(in) + H(+)(out). Not inhibited by lithium. Partial allosteric regulation on ions sodium binding. Functionally, symporter that cotransports neutral amino acids and sodium ions, coupled to an H(+) antiporter activity. Releases L-glutamine and glycine from astroglial cells and may participate in the glutamate/GABA-glutamine cycle and the NMDA receptors activation. In addition contributes significantly to L-glutamine uptake in retina, namely in ganglion and Mueller cells and, therefore participates in the retinal glutamate-glutamine cycle. The transport activity is pH sensitive, Li(+) tolerant, bidirectional and associated with large uncoupled fluxes of protons. The transport is electroneutral coupled to the cotransport of 1 Na(+) and the antiport of 1 H(+). May have particular importance for modulation of net hepatic glutamine flux. The polypeptide is Sodium-coupled neutral amino acid transporter 5 (Bos taurus (Bovine)).